The following is a 505-amino-acid chain: MSRSYNDELQFLEKISKNCWRIKKGFVPNMQVEGVFYVNDSLEKLMFEELRNACRGGGVGGFLPAMKQIGNVAALPGIVHRSIGLPDVHSGYGFAIGNMAAFDMNDPEAVVSPGGVGFDINCGVRLLRTNLDESDVQPVKEQLAQAMFDHIPVGVGSKGVIPMNAKDLEEALEMGVDWSLREGYAWAEDKEHCEEYGRMLQADPNKVSARAKKRGLPQLGTLGAGNHYAEIQVVDEIFNEYAAKKMGIDHKGQVCVMIHSGSRGLGHQVATDALVAMEKAMKRDKIIVNDRQLACARIASPEGQDYLKGMAAAGNYAWVNRSSMTFLTRQAFAKVFNTTPDDLDLHVIYDVSHNIAKVEQHVVDGKERTLLVHRKGSTRAFPPHHPLIAVDYQLTGQPVLIGGTMGTCSYVLTGTEQGMTETFGTTCHGAGRALSRAKSRRNLDFQDVLDKLADMGIAIRVASPKLVMEEAPESYKNVTDVVNTCHDAGISKKAIKLRPIAVIKG.

Mn(2+) is bound by residues aspartate 119, cysteine 122, histidine 227, and histidine 259. A GMP-binding site is contributed by 226-230 (NHYAE). Serine 300 carries the post-translational modification Phosphoserine. Histidine 353 is a binding site for Mn(2+). GMP is bound by residues 353 to 354 (HN), 402 to 405 (GGTM), serine 409, and 428 to 431 (HGAG). Residue histidine 428 is the GMP-histidine intermediate of the active site. A Glycyl lysine isopeptide (Lys-Gly) (interchain with G-Cter in SUMO2) cross-link involves residue lysine 496. Position 504 (lysine 504) interacts with GMP.

This sequence belongs to the RtcB family. As to quaternary structure, catalytic component of the tRNA-splicing ligase complex. The cofactor is Mn(2+).

The protein localises to the nucleus. Its subcellular location is the cytoplasm. The enzyme catalyses a 3'-end 3'-phospho-ribonucleotide-RNA + a 5'-end dephospho-ribonucleoside-RNA + GTP = a ribonucleotidyl-ribonucleotide-RNA + GMP + diphosphate. It catalyses the reaction a 3'-end 2',3'-cyclophospho-ribonucleotide-RNA + a 5'-end dephospho-ribonucleoside-RNA + GTP + H2O = a ribonucleotidyl-ribonucleotide-RNA + GMP + diphosphate + H(+). In terms of biological role, catalytic subunit of the tRNA-splicing ligase complex that acts by directly joining spliced tRNA halves to mature-sized tRNAs by incorporating the precursor-derived splice junction phosphate into the mature tRNA as a canonical 3',5'-phosphodiester. May act as an RNA ligase with broad substrate specificity, and may function toward other RNAs. In Bos taurus (Bovine), this protein is RNA-splicing ligase RtcB homolog.